Here is a 347-residue protein sequence, read N- to C-terminus: UDP-3-O-acylglucosamine N-acyltransferase (347 aa).

His-241 serves as the catalytic Proton acceptor.

This sequence belongs to the transferase hexapeptide repeat family. LpxD subfamily. Homotrimer.

It carries out the reaction a UDP-3-O-[(3R)-3-hydroxyacyl]-alpha-D-glucosamine + a (3R)-hydroxyacyl-[ACP] = a UDP-2-N,3-O-bis[(3R)-3-hydroxyacyl]-alpha-D-glucosamine + holo-[ACP] + H(+). It participates in bacterial outer membrane biogenesis; LPS lipid A biosynthesis. Its function is as follows. Catalyzes the N-acylation of UDP-3-O-acylglucosamine using 3-hydroxyacyl-ACP as the acyl donor. Is involved in the biosynthesis of lipid A, a phosphorylated glycolipid that anchors the lipopolysaccharide to the outer membrane of the cell. The sequence is that of UDP-3-O-acylglucosamine N-acyltransferase from Neisseria gonorrhoeae (strain ATCC 700825 / FA 1090).